Reading from the N-terminus, the 25-residue chain is GGPAGKQNAVNQLLVLIYDPKSYKD.

The protein belongs to the tyrosinase family. Hemocyanin subfamily. Hemolymph.

It localises to the secreted. The protein localises to the extracellular space. Its function is as follows. Hemocyanins are copper-containing oxygen carriers occurring freely dissolved in the hemolymph of many mollusks and arthropods. This chain is Hemocyanin subunit 3, found in Maja squinado (Mediterranean spider crab).